A 218-amino-acid chain; its full sequence is Mediator of RNA polymerase II transcription subunit 20 (218 aa).

The protein belongs to the Mediator complex subunit 20 family. As to quaternary structure, component of the Mediator complex.

It localises to the nucleus. In terms of biological role, component of the Mediator complex, a coactivator involved in the regulated transcription of nearly all RNA polymerase II-dependent genes. Mediator functions as a bridge to convey information from gene-specific regulatory proteins to the basal RNA polymerase II transcription machinery. Mediator is recruited to promoters by direct interactions with regulatory proteins and serves as a scaffold for the assembly of a functional preinitiation complex with RNA polymerase II and the general transcription factors. This Yarrowia lipolytica (strain CLIB 122 / E 150) (Yeast) protein is Mediator of RNA polymerase II transcription subunit 20 (SRB2).